A 344-amino-acid polypeptide reads, in one-letter code: Phosphoribosylformylglycinamidine cyclo-ligase (344 aa).

Belongs to the AIR synthase family.

The protein localises to the cytoplasm. The enzyme catalyses 2-formamido-N(1)-(5-O-phospho-beta-D-ribosyl)acetamidine + ATP = 5-amino-1-(5-phospho-beta-D-ribosyl)imidazole + ADP + phosphate + H(+). It functions in the pathway purine metabolism; IMP biosynthesis via de novo pathway; 5-amino-1-(5-phospho-D-ribosyl)imidazole from N(2)-formyl-N(1)-(5-phospho-D-ribosyl)glycinamide: step 2/2. The polypeptide is Phosphoribosylformylglycinamidine cyclo-ligase (Haemophilus influenzae (strain 86-028NP)).